The primary structure comprises 510 residues: Protein disulfide-isomerase (510 aa).

The signal sequence occupies residues 1–19 (MLRRALLCLAVAAAPGLYA). The Thioredoxin 1 domain maps to 20–136 (DAPEEEDHVL…IVNWLKKRTG (117 aa)). Residues C55 and C58 each act as nucleophile in the active site. C55 and C58 are joined by a disulfide. K202 is modified (N6-acetyllysine). Residues K224 and K273 each carry the N6-succinyllysine modification. Residues S333 and S359 each carry the phosphoserine modification. A Thioredoxin 2 domain is found at 351–477 (GKIKPHLMSQ…FKKFLESGGQ (127 aa)). Catalysis depends on nucleophile residues C399 and C402. Residues C399 and C402 are joined by a disulfide bond. At S429 the chain carries Phosphoserine. The interval 473–510 (ESGGQDGAGDDDDLEDLEEAEEPDMEEDDDQKAVKDEL) is disordered. The span at 480-502 (AGDDDDLEDLEEAEEPDMEEDDD) shows a compositional bias: acidic residues. Residues 507–510 (KDEL) carry the Prevents secretion from ER motif.

It belongs to the protein disulfide isomerase family. As to quaternary structure, heterodimer; heterodimerizes with the protein microsomal triglyceride transfer MTTP. Homodimer. Homodimer. Monomers and homotetramers may also occur. Interacts with P4HA2, forming a heterotetramer consisting of 2 alpha subunits (P4HA2) and 2 beta (P4HB), where P4HB plays the role of a structural subunit; this tetramer catalyzes the formation of 4-hydroxyproline in collagen. Also constitutes the structural subunit of the microsomal triacylglycerol transfer protein MTTP in mammalian cells. Stabilizes both enzymes and retain them in the ER without contributing to the catalytic activity. Binds UBQLN1. Interacts with ERO1B. Interacts with ILDR2. Interacts with ERN1/IRE1A (via N-terminus); the interaction is enhanced by phosphorylation of P4HB by FAM20C in response to endoplasmic reticulum stress and results in attenuation of ERN1 activity. Phosphorylation of Ser-359 by FAM20C is induced by endoplasmic reticulum stress and results in a functional switch from oxidoreductase to molecular chaperone. It also promotes interaction with ERN1.

It is found in the endoplasmic reticulum. The protein localises to the endoplasmic reticulum lumen. The protein resides in the melanosome. It localises to the cell membrane. The enzyme catalyses Catalyzes the rearrangement of -S-S- bonds in proteins.. Functionally, this multifunctional protein catalyzes the formation, breakage and rearrangement of disulfide bonds. At the cell surface, seems to act as a reductase that cleaves disulfide bonds of proteins attached to the cell. May therefore cause structural modifications of exofacial proteins. Inside the cell, seems to form/rearrange disulfide bonds of nascent proteins. At high concentrations and following phosphorylation by FAM20C, functions as a chaperone that inhibits aggregation of misfolded proteins. At low concentrations, facilitates aggregation (anti-chaperone activity). May be involved with other chaperones in the structural modification of the TG precursor in hormone biogenesis. Also acts as a structural subunit of various enzymes such as prolyl 4-hydroxylase and microsomal triacylglycerol transfer protein MTTP. Receptor for LGALS9; the interaction retains P4HB at the cell surface of Th2 T helper cells, increasing disulfide reductase activity at the plasma membrane, altering the plasma membrane redox state and enhancing cell migration. The sequence is that of Protein disulfide-isomerase (P4HB) from Macaca fuscata fuscata (Japanese macaque).